Here is a 196-residue protein sequence, read N- to C-terminus: Phosphoheptose isomerase (196 aa).

Residues 34-196 (MVQCLLGGKK…DRTLFPQDEA (163 aa)) enclose the SIS domain. 49–51 (NGG) contacts substrate. Zn(2+) is bound by residues histidine 58 and glutamate 62. Substrate-binding positions include glutamate 62, 91-92 (ND), 117-119 (STS), serine 122, and glutamine 172. Residues glutamine 172 and histidine 180 each contribute to the Zn(2+) site.

It belongs to the SIS family. GmhA subfamily. In terms of assembly, homotetramer. Zn(2+) is required as a cofactor.

It is found in the cytoplasm. It carries out the reaction 2 D-sedoheptulose 7-phosphate = D-glycero-alpha-D-manno-heptose 7-phosphate + D-glycero-beta-D-manno-heptose 7-phosphate. Its pathway is carbohydrate biosynthesis; D-glycero-D-manno-heptose 7-phosphate biosynthesis; D-glycero-alpha-D-manno-heptose 7-phosphate and D-glycero-beta-D-manno-heptose 7-phosphate from sedoheptulose 7-phosphate: step 1/1. Catalyzes the isomerization of sedoheptulose 7-phosphate in D-glycero-D-manno-heptose 7-phosphate. The polypeptide is Phosphoheptose isomerase (Shewanella denitrificans (strain OS217 / ATCC BAA-1090 / DSM 15013)).